The following is a 1002-amino-acid chain: Isoleucine--tRNA ligase, mitochondrial (1002 aa).

Positions Pro-94–His-104 match the 'HIGH' region motif. The short motif at Lys-668 to Ser-672 is the 'KMSKS' region element. ATP is bound at residue Lys-671.

Belongs to the class-I aminoacyl-tRNA synthetase family.

Its subcellular location is the mitochondrion matrix. The catalysed reaction is tRNA(Ile) + L-isoleucine + ATP = L-isoleucyl-tRNA(Ile) + AMP + diphosphate. The polypeptide is Isoleucine--tRNA ligase, mitochondrial (ISM1) (Saccharomyces cerevisiae (strain ATCC 204508 / S288c) (Baker's yeast)).